The chain runs to 124 residues: Small ribosomal subunit protein uS12 (124 aa).

Position 89 is a 3-methylthioaspartic acid (aspartate 89). Positions 103 to 124 (DTAGVKDRRQSRSKYGAKSPKE) are disordered.

The protein belongs to the universal ribosomal protein uS12 family. In terms of assembly, part of the 30S ribosomal subunit. Contacts proteins S8 and S17. May interact with IF1 in the 30S initiation complex.

With S4 and S5 plays an important role in translational accuracy. Functionally, interacts with and stabilizes bases of the 16S rRNA that are involved in tRNA selection in the A site and with the mRNA backbone. Located at the interface of the 30S and 50S subunits, it traverses the body of the 30S subunit contacting proteins on the other side and probably holding the rRNA structure together. The combined cluster of proteins S8, S12 and S17 appears to hold together the shoulder and platform of the 30S subunit. This Prochlorococcus marinus (strain NATL2A) protein is Small ribosomal subunit protein uS12.